A 224-amino-acid chain; its full sequence is Synaptogyrin-2 (224 aa).

Met1 is subject to N-acetylmethionine. Residue Ser3 is modified to Phosphoserine. One can recognise an MARVEL domain in the interval 20–171 (YVSQPQVVTR…LASLAYQRYK (152 aa)). Helical transmembrane passes span 30–50 (LVSM…GYIN), 73–93 (AIGV…AFFS), 105–125 (VIGD…GFCF), and 147–167 (AAIT…SLAY).

This sequence belongs to the synaptogyrin family. Post-translationally, may be tyrosine phosphorylated by Src. As to expression, ubiquitously expressed with lower expression in brain (at protein level).

It is found in the cytoplasmic vesicle membrane. It localises to the cytoplasmic vesicle. The protein localises to the secretory vesicle. The protein resides in the synaptic vesicle membrane. May play a role in regulated exocytosis. In neuronal cells, modulates the localization of synaptophysin/SYP into synaptic-like microvesicles and may therefore play a role in the formation and/or the maturation of this vesicles. May also play a role in GLUT4 storage and transport to the plasma membrane. The chain is Synaptogyrin-2 from Rattus norvegicus (Rat).